We begin with the raw amino-acid sequence, 254 residues long: Probable protein ABIL5 (254 aa).

The interval 1 to 26 (MEVAEAGVDGVAGRRQQEEASGAAPF) is disordered.

This sequence belongs to the ABI family. As to quaternary structure, binds SCAR.

It localises to the cytoplasm. The protein localises to the cytoskeleton. Involved in regulation of actin and microtubule organization. Part of a WAVE complex that activates the Arp2/3 complex. This is Probable protein ABIL5 from Oryza sativa subsp. japonica (Rice).